Reading from the N-terminus, the 107-residue chain is Metallothionein-1 (107 aa).

Belongs to the metallothionein superfamily. Type 7 family.

The metallothioneins are involved in the cellular sequestration of toxic metal ions. Binds 12 cadmium ions per molecule. This is Metallothionein-1 from Tetrahymena thermophila.